Consider the following 174-residue polypeptide: Small ribosomal subunit protein uS5 (174 aa).

In terms of domain architecture, S5 DRBM spans 17-80 (WQERVVQIRR…ADGKKHLIDV (64 aa)).

This sequence belongs to the universal ribosomal protein uS5 family. Part of the 30S ribosomal subunit. Contacts proteins S4 and S8.

In terms of biological role, with S4 and S12 plays an important role in translational accuracy. Located at the back of the 30S subunit body where it stabilizes the conformation of the head with respect to the body. In Thermosynechococcus vestitus (strain NIES-2133 / IAM M-273 / BP-1), this protein is Small ribosomal subunit protein uS5.